The following is a 373-amino-acid chain: Secondary metabolism regulator laeA (373 aa).

Disordered stretches follow at residues 1 to 21 (MFLN…PLNV) and 53 to 81 (AAER…NPDR). Over residues 67-77 (GSPSINSTSSK) the composition is skewed to polar residues.

The protein belongs to the methyltransferase superfamily. LaeA methyltransferase family. As to quaternary structure, component of the heterotrimeric velvet complex composed of laeA, veA and velB; VeA acting as a bridging protein between laeA and velB.

The protein resides in the nucleus. It carries out the reaction L-methionyl-[protein] + S-adenosyl-L-methionine = S-methyl-L-methionyl-[protein] + S-adenosyl-L-homocysteine. Its function is as follows. Methyltransferase that performs automethylation. No other methyl-accepting substrate has been identified yet. Component of the velvet transcription factor complex that acts as a global regulator for secondary metabolite gene expression. Controls the expression of the cyclopiazonic acid (CPA) gene clusters. Regulates also pigmentation and conidial head morphology. The sequence is that of Secondary metabolism regulator laeA from Aspergillus fumisynnematus.